The following is a 446-amino-acid chain: MPTDVLTVCPAPTGTTWVIQSEGYLQGKTTIPGDKSISHRALMLGALASGETTIQGLLLGEDPRSTAHCFRALGAEISELNTEHVRVQGIGLGHLLEPDVVLDAGNSGTTLRLMLGILASHPDRLFTVTGDTSLCSRPMGRVIKPLQQMGAHIWGRQSDTLAPLAIRGQQLQPIHYPSPIASAQVKSCIMFAGLMAEGQTTITEPALSRDHSERMFAAFGANIIVDPDTCSVTVTGPAQLHGQAIIVPGDISSAAFWLVAAAIVPGSDIWIENVGVNPTRTGVLEVLEQMGAKMTLANQRTVAGEPVADIHIQHSQLHGTVIEGAVIPRLVDEVPILAVAALFAQGPTTIRDAAELRVKESDRLTAMATQLQKMGANITEQPDGLEIQGGASLQGADVDSFGDHRVGMSLAIAALNATGSTTIHRAEAAAISYPNFVATLQQLWHS.

3-phosphoshikimate is bound by residues lysine 35, serine 36, and arginine 40. Position 35 (lysine 35) interacts with phosphoenolpyruvate. Residues glycine 108 and arginine 137 each contribute to the phosphoenolpyruvate site. Positions 182, 184, 332, and 359 each coordinate 3-phosphoshikimate. Glutamine 184 is a binding site for phosphoenolpyruvate. Catalysis depends on aspartate 332, which acts as the Proton acceptor. Phosphoenolpyruvate contacts are provided by arginine 363 and arginine 405.

It belongs to the EPSP synthase family. Monomer.

The protein localises to the cytoplasm. It catalyses the reaction 3-phosphoshikimate + phosphoenolpyruvate = 5-O-(1-carboxyvinyl)-3-phosphoshikimate + phosphate. Its pathway is metabolic intermediate biosynthesis; chorismate biosynthesis; chorismate from D-erythrose 4-phosphate and phosphoenolpyruvate: step 6/7. Its function is as follows. Catalyzes the transfer of the enolpyruvyl moiety of phosphoenolpyruvate (PEP) to the 5-hydroxyl of shikimate-3-phosphate (S3P) to produce enolpyruvyl shikimate-3-phosphate and inorganic phosphate. In Acaryochloris marina (strain MBIC 11017), this protein is 3-phosphoshikimate 1-carboxyvinyltransferase.